We begin with the raw amino-acid sequence, 309 residues long: Shugoshin (309 aa).

A coiled-coil region spans residues 42 to 77; the sequence is NLLLKQQVVQCTKTIEKLRNENVALRQKNQELIDGT. Disordered regions lie at residues 165–195 and 210–309; these read FDNNSSQSTSSIQNAVNGTPRKKQSVGKGRR and EEAS…NTFF. Over residues 167–178 the composition is skewed to low complexity; the sequence is NNSSQSTSSIQN. A compositionally biased stretch (basic residues) spans 184–193; sequence PRKKQSVGKG.

It belongs to the shugoshin family. As to expression, expressed in gonads.

The protein resides in the nucleus. It localises to the chromosome. The protein localises to the centromere. Its function is as follows. Component of cell cycle checkpoints, which ensures chromosome segregation during meiosis and mitosis. During meiotic prophase, it is involved in the regulation of the synapsis checkpoint, which monitors whether homologous chromosomes have synapsed, and the DNA damage response. Plays a central role in chromosome cohesion during cell division by preventing premature dissociation of cohesin complex after prophase, when most of cohesin complex dissociates from chromosomes arms. The polypeptide is Shugoshin (Caenorhabditis elegans).